A 198-amino-acid chain; its full sequence is Probable GTP-binding protein EngB (198 aa).

Positions 22 to 196 (NLSEIAFVGR…WNWIKGQAEL (175 aa)) constitute an EngB-type G domain. GTP is bound by residues 30 to 37 (GRSNVGKS), 57 to 61 (GKTQT), 75 to 78 (DVPG), 142 to 145 (TKAD), and 175 to 177 (FSA). Mg(2+) contacts are provided by Ser37 and Thr59.

It belongs to the TRAFAC class TrmE-Era-EngA-EngB-Septin-like GTPase superfamily. EngB GTPase family. Mg(2+) is required as a cofactor.

Necessary for normal cell division and for the maintenance of normal septation. This chain is Probable GTP-binding protein EngB, found in Oenococcus oeni (strain ATCC BAA-331 / PSU-1).